A 193-amino-acid polypeptide reads, in one-letter code: MFWRKHVRILFTVTLIWQAIHLGKGREKEHEKDVKNFNDTAQKQSPKNSVTIIDAFSDMNQSYQSRKQQNSREFVPFTGITESKNLNRNCCQNGGTCILGAFCACPKHFSGRHCELRKCGSIIHGDWVMKGCWLCRCLYGTLKCLSQNTQDGCELRREEEIIRLYSNGLRLQQTMSALICLLTFLLELCCWQL.

The first 25 residues, 1–25 (MFWRKHVRILFTVTLIWQAIHLGKG), serve as a signal peptide directing secretion. N-linked (GlcNAc...) asparagine glycans are attached at residues asparagine 38 and asparagine 60. Disulfide bonds link cysteine 91/cysteine 103 and cysteine 105/cysteine 114. The EGF-like domain maps to 91 to 115 (CQNGGTCILGAFCACPKHFSGRHCE).

Belongs to the EGF-CFC (Cripto-1/FRL1/Cryptic) family.

It is found in the cell membrane. Its subcellular location is the secreted. Functionally, may play a role in mesoderm and/or neural patterning during gastrulation. The polypeptide is Cryptic protein (CFC1) (Gallus gallus (Chicken)).